A 585-amino-acid polypeptide reads, in one-letter code: Frizzled-5 (585 aa).

A signal peptide spans 1-26 (MARPDPSAPPSLLLLLLAQLVGRAAA). Over 27–238 (ASKAPVCQEI…PDERTFATFW (212 aa)) the chain is Extracellular. Positions 28–150 (SKAPVCQEIT…GDAEVLCMDY (123 aa)) constitute an FZ domain. Disulfide bonds link cysteine 33/cysteine 94, cysteine 41/cysteine 87, cysteine 78/cysteine 116, cysteine 105/cysteine 147, and cysteine 109/cysteine 133. A glycan (N-linked (GlcNAc...) asparagine) is linked at asparagine 47. Asparagine 151 carries an N-linked (GlcNAc...) asparagine glycan. The interval 156–182 (TTASPKSFPAKPTLPGPPGAPSSGGEC) is disordered. The chain crosses the membrane as a helical span at residues 239–259 (IGLWSVLCFISTSTTVATFLI). Over 260–270 (DMERFRYPERP) the chain is Cytoplasmic. The chain crosses the membrane as a helical span at residues 271–291 (IIFLSACYLCVSLGFLVRLVV). The Extracellular portion of the chain corresponds to 292–315 (GHASVACSREHSHIHYETTGPALC). A helical transmembrane segment spans residues 316–336 (TVVFLLVYFFGMASSIWWVIL). Residues 337 to 358 (SLTWFLAAGMKWGNEAIAGYAQ) are Cytoplasmic-facing. Residues 359–379 (YFHLAAWLIPSVKSITALALS) form a helical membrane-spanning segment. Over 380-402 (SVDGDPVAGVCYVGNQNLNSLRG) the chain is Extracellular. The helical transmembrane segment at 403–423 (FVLGPLVLYLLVGTLFLLAGF) threads the bilayer. The Cytoplasmic portion of the chain corresponds to 424–449 (VSLFRIRSVIKQGGTKTDKLEKLMIR). Residues 450–470 (IGIFTLLYTVPASIVVACYLY) traverse the membrane as a helical segment. Over 471 to 500 (EQHYRESWEAALTCACPGSDAGQPRAKPEY) the chain is Extracellular. A helical membrane pass occupies residues 501-521 (WVLMLKYFMCLVVGITSGVWI). The Cytoplasmic portion of the chain corresponds to 522-585 (WSGKTLESWR…YHKQVSLSHV (64 aa)). The Lys-Thr-X-X-X-Trp motif, mediates interaction with the PDZ domain of Dvl family members signature appears at 525–530 (KTLESW). The PDZ-binding signature appears at 583 to 585 (SHV).

The protein belongs to the G-protein coupled receptor Fz/Smo family. As to quaternary structure, binding of unsaturated fatty acid molecules (via FZ domain) promotes homodimerization (via FZ domain). Interacts with WNT2B. Interacts with WNT7A. Interacts with GOPC. Post-translationally, ubiquitinated by RNF43 and ZNRF3, leading to its degradation by the proteasome.

It is found in the cell membrane. It localises to the golgi apparatus membrane. The protein resides in the synapse. The protein localises to the perikaryon. Its subcellular location is the cell projection. It is found in the dendrite. It localises to the axon. Receptor for Wnt proteins. Functions in the canonical Wnt/beta-catenin signaling pathway. In vitro activates WNT2, WNT10B, WNT5A, but not WNT2B or WNT4 signaling. In neurons, activation by WNT7A promotes formation of synapses. May be involved in transduction and intercellular transmission of polarity information during tissue morphogenesis and/or in differentiated tissues. Plays a role in yolk sac angiogenesis and in placental vascularization. Plays a role in ocular development. In Rattus norvegicus (Rat), this protein is Frizzled-5 (Fzd5).